The primary structure comprises 562 residues: Eukaryotic translation initiation factor 3 subunit L (562 aa).

The PCI domain occupies 329–535; sequence DAIRVFANIL…IHIADTKVAR (207 aa).

The protein belongs to the eIF-3 subunit L family. As to quaternary structure, component of the eukaryotic translation initiation factor 3 (eIF-3) complex, which is composed of 13 subunits: eif3a, eif3b, eif3c, eif3d, eif3e, eif3f, eif3g, eif3h, eif3i, eif3j, eif3k, eif3l and eif3m.

The protein resides in the cytoplasm. Its function is as follows. Component of the eukaryotic translation initiation factor 3 (eIF-3) complex, which is involved in protein synthesis of a specialized repertoire of mRNAs and, together with other initiation factors, stimulates binding of mRNA and methionyl-tRNAi to the 40S ribosome. The eIF-3 complex specifically targets and initiates translation of a subset of mRNAs involved in cell proliferation. This chain is Eukaryotic translation initiation factor 3 subunit L (eif3l), found in Xenopus tropicalis (Western clawed frog).